The following is a 294-amino-acid chain: MIRLRTLIEKNRSESRKKIVSSTLDSLPEGCISNIISFTSPEDACVAAAVSKIFESAVKSDIVWEKFLPTDYESLITPSRVFSSKKELYFSLCNDPLLIEDGKMSLWLEKASGKRCIMLSATAMNLSSMADMSQRFLWIPCPESRFETVAALREAYRFEFNCRMNTRVLSLRTRYSVYIVFKKADNWCGFKGVSIEAVVGIVGEESFRSFICFDTHGKGQARKRKVVAKPELREDGWMETEIGEFYNEGGLMSSDEVEISTVEGKYAQQKRGLVILGIEIRPAKILEEFSVCRL.

The 47-residue stretch at 21-67 (SSTLDSLPEGCISNIISFTSPEDACVAAAVSKIFESAVKSDIVWEKF) folds into the F-box domain.

As to quaternary structure, part of a SCF (SKP1-cullin-F-box) protein ligase complex. Interacts with SKP1A/ASK1.

The protein operates within protein modification; protein ubiquitination. In Arabidopsis thaliana (Mouse-ear cress), this protein is F-box protein SKIP3 (SKIP3).